A 399-amino-acid chain; its full sequence is Argininosuccinate synthase (399 aa).

ATP is bound at residue 8 to 16 (AYSGGLDTT). Residue Tyr-87 participates in L-citrulline binding. ATP is bound at residue Gly-117. L-aspartate-binding residues include Thr-119, Asn-123, and Asp-124. Asn-123 contributes to the L-citrulline binding site. The L-citrulline site is built by Arg-127, Ser-175, Glu-259, and Tyr-271.

This sequence belongs to the argininosuccinate synthase family. Type 1 subfamily. In terms of assembly, homotetramer.

The protein resides in the cytoplasm. It carries out the reaction L-citrulline + L-aspartate + ATP = 2-(N(omega)-L-arginino)succinate + AMP + diphosphate + H(+). Its pathway is amino-acid biosynthesis; L-arginine biosynthesis; L-arginine from L-ornithine and carbamoyl phosphate: step 2/3. The protein is Argininosuccinate synthase of Corynebacterium urealyticum (strain ATCC 43042 / DSM 7109).